Reading from the N-terminus, the 232-residue chain is RNA chaperone ProQ (232 aa).

Positions 105 to 182 (EAKARVQAQR…REEQHTPVSD (78 aa)) are disordered. Basic and acidic residues predominate over residues 117–136 (QQAKKREAAAAAGEKEDAPR). The segment covering 137–146 (RERKPRPTTP) has biased composition (basic residues). A compositionally biased stretch (basic and acidic residues) spans 147-177 (RRKEGAERKPRAQKPVEKAPKTVKAPREEQH).

The protein belongs to the ProQ family.

The protein localises to the cytoplasm. Its function is as follows. RNA chaperone with significant RNA binding, RNA strand exchange and RNA duplexing activities. May regulate ProP activity through an RNA-based, post-transcriptional mechanism. The sequence is that of RNA chaperone ProQ from Shigella boydii serotype 18 (strain CDC 3083-94 / BS512).